The sequence spans 560 residues: Protein SINE1 (560 aa).

Gly2 is subject to N-acetylglycine. The segment at 7 to 287 (PILRQELANL…VRGAAYEAMM (281 aa)) is ARMADILLO-type fold. Residues 517 to 560 (KKKKKKMSYAKLVIAISFVVVALFATVILMVNQDDDVGYYTVPT) form the KASH domain. Residues 528–548 (LVIAISFVVVALFATVILMVN) form a helical membrane-spanning segment. A Required for nuclear localization motif is present at residues 557–560 (TVPT).

Interacts with SUN1 and SUN2. Binds to F-actin. As to expression, preferentially expressed in guards cells, but also detected in root cells.

It localises to the nucleus membrane. Its function is as follows. Plays a role in nucleus positioning in guard cells. This chain is Protein SINE1, found in Arabidopsis thaliana (Mouse-ear cress).